A 550-amino-acid chain; its full sequence is Hydroxylamine reductase (550 aa).

Residues Cys3, Cys6, Cys18, and Cys25 each contribute to the [2Fe-2S] cluster site. Residues His249, Glu273, Cys317, Cys405, Cys433, Cys458, Glu492, and Lys494 each contribute to the hybrid [4Fe-2O-2S] cluster site. Residue Cys405 is modified to Cysteine persulfide.

The protein belongs to the HCP family. It depends on [2Fe-2S] cluster as a cofactor. Hybrid [4Fe-2O-2S] cluster is required as a cofactor.

It localises to the cytoplasm. The catalysed reaction is A + NH4(+) + H2O = hydroxylamine + AH2 + H(+). Its function is as follows. Catalyzes the reduction of hydroxylamine to form NH(3) and H(2)O. This Salmonella paratyphi A (strain ATCC 9150 / SARB42) protein is Hydroxylamine reductase.